Consider the following 151-residue polypeptide: MAENNPLKIHNLRPAPGAKTAKTRVGRGEASKGKTAGRGTKGTKARYQVPERFEGGQMPLHMRLPKLKGFKNPFRTEYQVVNLDKLTALYPEGGEVTVEGLVAKGAVRKNSLVKVLGQGEISVALQVTVDAVSGSAKEKITAAGGTVTELV.

Positions 1–60 are disordered; it reads MAENNPLKIHNLRPAPGAKTAKTRVGRGEASKGKTAGRGTKGTKARYQVPERFEGGQMPL.

Belongs to the universal ribosomal protein uL15 family. Part of the 50S ribosomal subunit.

Binds to the 23S rRNA. In Streptomyces avermitilis (strain ATCC 31267 / DSM 46492 / JCM 5070 / NBRC 14893 / NCIMB 12804 / NRRL 8165 / MA-4680), this protein is Large ribosomal subunit protein uL15.